Reading from the N-terminus, the 73-residue chain is MKPSMAILLVIALIIFSLDKSYSANDKPIGKCGDAKRNKPCLACSHRSSIADFYSKCCTYDAVYNGCLDKLRH.

Residues 1-23 (MKPSMAILLVIALIIFSLDKSYS) form the signal peptide. Cystine bridges form between C32/C58, C41/C57, and C44/C67.

In terms of processing, contains 3 disulfide bonds. In terms of tissue distribution, expressed by the venom gland.

The protein resides in the secreted. In terms of biological role, inhibits voltage-gated potassium channels. The polypeptide is Kappa-scoloptoxin(03)-Ssm1b (Scolopendra mutilans (Chinese red-headed centipede)).